Reading from the N-terminus, the 227-residue chain is Ribonuclease 3 (227 aa).

Residues 4–133 (FEKLETLLGY…LIAAIYLDSN (130 aa)) form the RNase III domain. E46 contributes to the Mg(2+) binding site. Residue D50 is part of the active site. Residues N119 and E122 each coordinate Mg(2+). E122 is an active-site residue. Residues 158–226 (DPKTALQEWA…ARCLLHRLKN (69 aa)) enclose the DRBM domain.

It belongs to the ribonuclease III family. In terms of assembly, homodimer. Mg(2+) serves as cofactor.

The protein resides in the cytoplasm. It catalyses the reaction Endonucleolytic cleavage to 5'-phosphomonoester.. Its function is as follows. Digests double-stranded RNA. Involved in the processing of primary rRNA transcript to yield the immediate precursors to the large and small rRNAs (23S and 16S). Processes some mRNAs, and tRNAs when they are encoded in the rRNA operon. Processes pre-crRNA and tracrRNA of type II CRISPR loci if present in the organism. The polypeptide is Ribonuclease 3 (Rickettsia typhi (strain ATCC VR-144 / Wilmington)).